We begin with the raw amino-acid sequence, 353 residues long: GTPase Obg (353 aa).

Residues 1–159 enclose the Obg domain; sequence MRFVDEVVIN…RVIRLELKLL (159 aa). The OBG-type G domain maps to 160–334; the sequence is ADVGLLGMPN…LCTAIMQELT (175 aa). Residues 166 to 173, 191 to 195, 213 to 216, 284 to 287, and 315 to 317 each bind GTP; these read GMPNAGKS, FTTLH, DIPG, NKMD, and SAA. Residues Ser-173 and Thr-193 each contribute to the Mg(2+) site.

This sequence belongs to the TRAFAC class OBG-HflX-like GTPase superfamily. OBG GTPase family. Monomer. Requires Mg(2+) as cofactor.

The protein resides in the cytoplasm. An essential GTPase which binds GTP, GDP and possibly (p)ppGpp with moderate affinity, with high nucleotide exchange rates and a fairly low GTP hydrolysis rate. Plays a role in control of the cell cycle, stress response, ribosome biogenesis and in those bacteria that undergo differentiation, in morphogenesis control. In Dichelobacter nodosus (strain VCS1703A), this protein is GTPase Obg.